Consider the following 1005-residue polypeptide: Defense-associated sirtuin 2 (1005 aa).

An SIR2 region spans residues 1–295 (MVKVDLESKR…YSAVMDLLIE (295 aa)). The interval 56-111 (YPQWWRLVDKYHEELYGSPKKGNYSSDEYLRIPQIFYNVKGEMAFDGILKDFFQVD) is inter-dimer interaction. Residues Tyr134, Asp135, and His171 contribute to the active site. The interval 296 to 548 (SQENKFITKD…YKILEFLSDN (253 aa)) is MID. The interval 549-1005 (QFLYDDTVKL…YLEILMNYFI (457 aa)) is CTD.

Homotetramer (dimer of dimers). Homodimer. The SIR2 domains are arranged in a central core, adopting a head-to-head arrangement, while the CTDs are positioned at the periphery of the complex. Tetramerization is necessary for the activation of NADase activity. The NADase enzymatic activity of this homotetrameric form is autoinhibited. The activated form of DSR2 (after binding to the phage tube protein) exists as tetramers and dimers, with the tetramers exhibiting more NADase activity. Each tetramer binds 4 NAD(+) molecules. As to quaternary structure, (Microbial infection) Interacts (via C-terminus) with phage SPR tail tube monomer protein (via N-terminus) in a 4:4 DSR2-Tube assembly; this interaction induces a conformation change of the tube protein and activates the NADase activity of DSR2. In terms of assembly, (Microbial infection) Interacts (via C-terminus) with phage SPbeta DSAD1 in a 4:2 ratio; this interaction prevents activation of the NADase defense activity of DSR2.

It catalyses the reaction NAD(+) + H2O = ADP-D-ribose + nicotinamide + H(+). With respect to regulation, (Microbial infection) NADase activity is activated through the binding of SPR phage tail tube monomer protein. NADase activity is inhibited through the binding to the phage SPbeta DSR anti-defense 1 (DSAD1). Anti-phage defense protein that is activated through the binding to the phage tail tube protein monomer and which hydrolyzes NAD+ upon activation (NADase activity). The resulting depletion of NAD(+) leads to an abortive infection. The chain is Defense-associated sirtuin 2 from Bacillus subtilis.